A 194-amino-acid chain; its full sequence is MAEKIDINRIQRDMFIEYKGEPYRVVDYDHVKPGKGQAFVRVKAKNMNTGNAIEITYKSSDSIELADFEQVFAEFSYKDADEYHFLTQNTHEMISINAEDIKEEAKFLKEGMTVVVFIYKNKPIGIELPKAVELEVIETDPGFKGDTAAGGSKPAKLETGAVIQVPFFINEGDIVKVDTRTGQYLERLDRAQKK.

It belongs to the elongation factor P family.

It is found in the cytoplasm. It participates in protein biosynthesis; polypeptide chain elongation. Functionally, involved in peptide bond synthesis. Stimulates efficient translation and peptide-bond synthesis on native or reconstituted 70S ribosomes in vitro. Probably functions indirectly by altering the affinity of the ribosome for aminoacyl-tRNA, thus increasing their reactivity as acceptors for peptidyl transferase. The protein is Elongation factor P of Hydrogenobaculum sp. (strain Y04AAS1).